We begin with the raw amino-acid sequence, 147 residues long: Sentan (147 aa).

Residues 1–32 (MGGCMHSTQDKSLHLEGDPNPSAAPTSTCAPR) form a disordered region. Basic and acidic residues predominate over residues 8–17 (TQDKSLHLEG).

This sequence belongs to the S-100 family.

The protein resides in the cell projection. It localises to the cilium. Its function is as follows. May be a component of the linker structure that bridges the ciliary membrane and peripheral singlet microtubules. The sequence is that of Sentan (SNTN) from Homo sapiens (Human).